Reading from the N-terminus, the 717-residue chain is RNA helicase NPH-II (717 aa).

The Helicase ATP-binding domain occupies Phe193–Tyr384. Gly206–Thr213 serves as a coordination point for ATP. The DEXH box signature appears at Asp331–His334. The Helicase C-terminal domain occupies Ile406–Tyr566.

It belongs to the DEAD box helicase family. DEAH subfamily. In terms of assembly, monomer.

The protein resides in the virion. The enzyme catalyses ATP + H2O = ADP + phosphate + H(+). Its function is as follows. NTP-dependent helicase that catalyzes unidirectional unwinding of 3'tailed duplex RNAs and plays an important role during transcription of early mRNAs, presumably by preventing R-loop formation behind the elongating RNA polymerase. Might also play a role in the export of newly synthesized mRNA chains out of the core into the cytoplasm. Required for replication and propagation of viral particles. The polypeptide is RNA helicase NPH-II (NPH2) (Melanoplus sanguinipes (Migratory grasshopper)).